A 638-amino-acid chain; its full sequence is Chaperone protein HtpG (638 aa).

Residues 1 to 346 form an a; substrate-binding region; that stretch reads MSQQETHGFQ…SNDLPLNVSR (346 aa). The segment at 347–563 is b; the sequence is EILQDNKVTT…EGEMSTQMIK (217 aa). Positions 564–638 are c; that stretch reads LMEAAGQAVP…MNEMLLAKLK (75 aa).

It belongs to the heat shock protein 90 family. In terms of assembly, homodimer.

The protein localises to the cytoplasm. Molecular chaperone. Has ATPase activity. In Shewanella sediminis (strain HAW-EB3), this protein is Chaperone protein HtpG.